Consider the following 104-residue polypeptide: Small ribosomal subunit protein uS10 (104 aa).

It belongs to the universal ribosomal protein uS10 family. As to quaternary structure, part of the 30S ribosomal subunit.

Its function is as follows. Involved in the binding of tRNA to the ribosomes. The chain is Small ribosomal subunit protein uS10 from Hydrogenobaculum sp. (strain Y04AAS1).